The primary structure comprises 129 residues: MIVRDLQEILGTDREVTGEGWTSRRLLLKKDGMGFSFHETIIAAGTEHLFWYKNHLEAVYCVAGNGTIEDLATGQVHRIKNGVLYALNNHDRHVLRGGTEDMRLICAFNPPVTGRETHDSDGSYELVEE.

This sequence belongs to the ectoine synthase family.

The enzyme catalyses (2S)-4-acetamido-2-aminobutanoate = L-ectoine + H2O. It functions in the pathway amine and polyamine biosynthesis; ectoine biosynthesis; L-ectoine from L-aspartate 4-semialdehyde: step 3/3. Functionally, catalyzes the circularization of gamma-N-acetyl-alpha,gamma-diaminobutyric acid (ADABA) to ectoine (1,4,5,6-tetrahydro-2-methyl-4-pyrimidine carboxylic acid), which is an excellent osmoprotectant. The protein is L-ectoine synthase of Desulfosudis oleivorans (strain DSM 6200 / JCM 39069 / Hxd3) (Desulfococcus oleovorans).